The chain runs to 425 residues: MAKTIQAIRGMNDCSPTESLLWQWVEEKVRSVLQTYGYSEVRMPIVESTPLFARAIGEVTDVVSKEMYTFWDNDEQLTLRPEGTAGCVRAAIEHGWIYNNEQRLWYMGPMFRHERPQKGRYRQFHQAGVEVFGIANPEIDAELILLTARLWKQLGIFDHVTLQLNSIGSLESRQNYRSALVEFLQQHTDLLSEEEKERLVKNPLRILDTKNQVLQEVLNDAPKLLDYLDQESREHFSQLCDLLDAVGIQYEINPKLVRGLDYYNKTVFEWVTSALGAQGTVCGGGRYDGLVEQLGGHATCSVGFAMGLERLVLLVQEVNKQIVLPSAVDIYVVYFGEKTTLPAFQLAEKIRTELPHLRTMTHCGGGNFKKQFKRADKVGAKFALVIGETEVKTQQVVVKDLLGGAEQLSLALTDVVIYLKQAITQ.

It belongs to the class-II aminoacyl-tRNA synthetase family. Homodimer.

The protein localises to the cytoplasm. It carries out the reaction tRNA(His) + L-histidine + ATP = L-histidyl-tRNA(His) + AMP + diphosphate + H(+). This Histophilus somni (strain 129Pt) (Haemophilus somnus) protein is Histidine--tRNA ligase.